A 344-amino-acid chain; its full sequence is Phenylalanine--tRNA ligase alpha subunit (344 aa).

Position 256 (Glu-256) interacts with Mg(2+).

This sequence belongs to the class-II aminoacyl-tRNA synthetase family. Phe-tRNA synthetase alpha subunit type 1 subfamily. Tetramer of two alpha and two beta subunits. The cofactor is Mg(2+).

It is found in the cytoplasm. It catalyses the reaction tRNA(Phe) + L-phenylalanine + ATP = L-phenylalanyl-tRNA(Phe) + AMP + diphosphate + H(+). This chain is Phenylalanine--tRNA ligase alpha subunit, found in Shouchella clausii (strain KSM-K16) (Alkalihalobacillus clausii).